We begin with the raw amino-acid sequence, 413 residues long: Arginine biosynthesis bifunctional protein ArgJ (413 aa).

Substrate contacts are provided by Thr160, Lys186, Thr197, Glu284, Asn408, and Ser413. Thr197 acts as the Nucleophile in catalysis.

It belongs to the ArgJ family. In terms of assembly, heterotetramer of two alpha and two beta chains.

Its subcellular location is the cytoplasm. It carries out the reaction N(2)-acetyl-L-ornithine + L-glutamate = N-acetyl-L-glutamate + L-ornithine. It catalyses the reaction L-glutamate + acetyl-CoA = N-acetyl-L-glutamate + CoA + H(+). The protein operates within amino-acid biosynthesis; L-arginine biosynthesis; L-ornithine and N-acetyl-L-glutamate from L-glutamate and N(2)-acetyl-L-ornithine (cyclic): step 1/1. Its pathway is amino-acid biosynthesis; L-arginine biosynthesis; N(2)-acetyl-L-ornithine from L-glutamate: step 1/4. Functionally, catalyzes two activities which are involved in the cyclic version of arginine biosynthesis: the synthesis of N-acetylglutamate from glutamate and acetyl-CoA as the acetyl donor, and of ornithine by transacetylation between N(2)-acetylornithine and glutamate. The protein is Arginine biosynthesis bifunctional protein ArgJ of Burkholderia mallei (strain ATCC 23344).